The following is a 92-amino-acid chain: Small ribosomal subunit protein uS19c (92 aa).

The protein belongs to the universal ribosomal protein uS19 family.

The protein localises to the plastid. It localises to the cyanelle. Its function is as follows. Protein S19 forms a complex with S13 that binds strongly to the 16S ribosomal RNA. This chain is Small ribosomal subunit protein uS19c (rps19), found in Cyanophora paradoxa.